We begin with the raw amino-acid sequence, 363 residues long: Endopolygalacturonase A (363 aa).

The signal sequence occupies residues 1 to 20 (MQLLQSSVIAATVGAALVAA). The propeptide occupies 21 to 28 (VPVELEAR). Cysteine 31 and cysteine 46 are disulfide-bonded. PbH1 repeat units follow at residues 158–187 (SDNLNITDVTIDNSAGTAEGHNTDAFDVGS), 188–209 (STYINIDGATVYNQDDCLAINS), 210–230 (GSHITFTNGYCDGGHGLSIGS), 239–260 (VEDVTISNSKVVNSQNGVRIKT), 268–290 (VSNVKFEDITLSGITKYGLIVEQ), and 302–347 (TNGI…SITG). Asparagine 162 is a glycosylation site (N-linked (GlcNAc...) asparagine). Catalysis depends on aspartate 202, which acts as the Proton donor. The cysteines at positions 204 and 220 are disulfide-linked. The active site involves histidine 224. 2 disulfide bridges follow: cysteine 330/cysteine 335 and cysteine 354/cysteine 363.

The protein belongs to the glycosyl hydrolase 28 family.

The protein resides in the secreted. It catalyses the reaction (1,4-alpha-D-galacturonosyl)n+m + H2O = (1,4-alpha-D-galacturonosyl)n + (1,4-alpha-D-galacturonosyl)m.. Its function is as follows. Involved in maceration and soft-rotting of plant tissue. Hydrolyzes the 1,4-alpha glycosidic bonds of de-esterified pectate in the smooth region of the plant cell wall. The chain is Endopolygalacturonase A (pgaA) from Aspergillus flavus (strain ATCC MYA-384 / AF70).